The following is a 267-amino-acid chain: RWD domain-containing protein 3 (267 aa).

The RWD domain occupies 7 to 114 (QELSALAAIF…LWTQQNLRHI (108 aa)). Interaction with UBE2I/UBC9 regions lie at residues 13 to 15 (AAI) and 100 to 102 (VHE).

As to quaternary structure, interacts with UBE2I/UBC9, NFKBIA, HIF1A and NCOA2.

It localises to the nucleus. It is found in the cytoplasm. Functionally, enhancer of SUMO conjugation. Via its interaction with UBE2I/UBC9, increases SUMO conjugation to proteins by promoting the binding of E1 and E2 enzymes, thioester linkage between SUMO and UBE2I/UBC9 and transfer of SUMO to specific target proteins which include HIF1A, PIAS, NFKBIA, NR3C1 and TOP1. Positively regulates the NF-kappa-B signaling pathway by enhancing the sumoylation of NF-kappa-B inhibitor alpha (NFKBIA), promoting its stabilization which consequently leads to an increased inhibition of NF-kappa-B transcriptional activity. Negatively regulates the hypoxia-inducible factor-1 alpha (HIF1A) signaling pathway by increasing the sumoylation of HIF1A, promoting its stabilization, transcriptional activity and the expression of its target gene VEGFA during hypoxia. Has no effect on ubiquitination. The protein is RWD domain-containing protein 3 (Rwdd3) of Rattus norvegicus (Rat).